A 403-amino-acid chain; its full sequence is L-alanine/L-glutamate racemase (403 aa).

Pyridoxal 5'-phosphate-binding positions include 62 to 64 (YSN), 92 to 93 (GL), and 209 to 211 (AVT). At Lys-212 the chain carries N6-(pyridoxal phosphate)lysine.

The protein belongs to the trans-sulfuration enzymes family. In terms of assembly, homotetramer; dimer of active dimers. The cofactor is pyridoxal 5'-phosphate.

The enzyme catalyses L-alanine = D-alanine. It carries out the reaction L-glutamate = D-glutamate. The catalysed reaction is L,L-cystathionine + H2O = L-homocysteine + pyruvate + NH4(+). The protein operates within cell wall biogenesis; peptidoglycan biosynthesis. Functionally, catalyzes the racemization of L-alanine to D-alanine, and of L-glutamate to D-glutamate. The activity is low, but likely physiological since W.pipientis wMel lacks canonical alr and murI genes, while D-alanine and D-glutamate are essential components of peptidoglycan. Also displays a vestigial cystathionine beta-lyase (CBL) activity, cleaving cystathionine to homocysteine and pyruvate; however, this reaction seems not to be physiologically relevant since the only met gene in the genome of this obligately intracellular parasitic bacterium is metC, demonstrating that it is a methionine auxotroph. This chain is L-alanine/L-glutamate racemase, found in Wolbachia pipientis wMel.